The primary structure comprises 395 residues: Ribosomal RNA large subunit methyltransferase G (395 aa).

This sequence belongs to the methyltransferase superfamily. RlmG family.

It is found in the cytoplasm. It carries out the reaction guanosine(1835) in 23S rRNA + S-adenosyl-L-methionine = N(2)-methylguanosine(1835) in 23S rRNA + S-adenosyl-L-homocysteine + H(+). Its function is as follows. Specifically methylates the guanine in position 1835 (m2G1835) of 23S rRNA. The polypeptide is Ribosomal RNA large subunit methyltransferase G (Yersinia pseudotuberculosis serotype O:1b (strain IP 31758)).